The sequence spans 389 residues: Pyruvate dehydrogenase E1 component subunit alpha, somatic form, mitochondrial (389 aa).

The N-terminal 28 residues, 1–28, are a transit peptide targeting the mitochondrion; sequence GKMLAAVSRVLSGVAQKPASRVLVASRT. An N6-acetyllysine; alternate modification is found at Lys-62. Position 62 is an N6-succinyllysine; alternate (Lys-62). Pyruvate-binding residues include His-91, Tyr-117, Arg-118, Ala-156, Gly-164, Val-166, Asp-195, Gly-196, Ala-197, Asn-224, and Tyr-226. The thiamine diphosphate site is built by Tyr-117 and Arg-118. Thiamine diphosphate is bound by residues Gly-164, Val-166, Asp-195, Gly-196, Ala-197, and Asn-224. Asp-195 provides a ligand contact to Mg(2+). Positions 224 and 226 each coordinate Mg(2+). At Ser-231 the chain carries Phosphoserine; by PDK1. Lys-243 is subject to N6-acetyllysine; alternate. The residue at position 243 (Lys-243) is an N6-succinyllysine; alternate. The residue at position 276 (Lys-276) is an N6-succinyllysine. His-291 contributes to the thiamine diphosphate binding site. A Phosphoserine; by PDK1, PDK2, PDK3 and PDK4 modification is found at Ser-292. The residue at position 294 (Ser-294) is a Phosphoserine. Ser-299 bears the Phosphoserine; by PDK1, PDK2, PDK3 and PDK4 mark. Position 300 is a phosphotyrosine (Tyr-300). Lys-312 is modified (N6-acetyllysine; alternate). Position 312 is an N6-succinyllysine; alternate (Lys-312). Residues Lys-320 and Lys-335 each carry the N6-acetyllysine modification. Position 384 is an N6-succinyllysine (Lys-384).

Heterotetramer of two PDHA1 and two PDHB subunits. The heterotetramer interacts with DLAT, and is part of the multimeric pyruvate dehydrogenase complex that contains multiple copies of pyruvate dehydrogenase (E1), dihydrolipoamide acetyltransferase (DLAT, E2) and lipoamide dehydrogenase (DLD, E3). These subunits are bound to an inner core composed of about 48 DLAT and 12 PDHX molecules. Thiamine diphosphate serves as cofactor. Requires Mg(2+) as cofactor. Phosphorylation at Ser-231, Ser-292 and Ser-299 by PDK family kinases inactivates the enzyme; for this phosphorylation at a single site is sufficient. Phosphorylation at Ser-292 interferes with access to active site, and thereby inactivates the enzyme. Dephosphorylation at all three sites, i.e. at Ser-231, Ser-292 and Ser-299, is required for reactivation. Post-translationally, acetylation alters the phosphorylation pattern. Deacetylated by SIRT3.

The protein localises to the mitochondrion matrix. It carries out the reaction N(6)-[(R)-lipoyl]-L-lysyl-[protein] + pyruvate + H(+) = N(6)-[(R)-S(8)-acetyldihydrolipoyl]-L-lysyl-[protein] + CO2. Pyruvate dehydrogenase activity is inhibited by phosphorylation of PDHA1; it is reactivated by dephosphorylation. Functionally, the pyruvate dehydrogenase complex catalyzes the overall conversion of pyruvate to acetyl-CoA and CO(2), and thereby links the glycolytic pathway to the tricarboxylic cycle. This Sus scrofa (Pig) protein is Pyruvate dehydrogenase E1 component subunit alpha, somatic form, mitochondrial (PDHA1).